The primary structure comprises 155 residues: Ribosomal RNA large subunit methyltransferase H (155 aa).

Residues L73, G104, and 123 to 128 (ISKMTF) each bind S-adenosyl-L-methionine.

The protein belongs to the RNA methyltransferase RlmH family. Homodimer.

It localises to the cytoplasm. It carries out the reaction pseudouridine(1915) in 23S rRNA + S-adenosyl-L-methionine = N(3)-methylpseudouridine(1915) in 23S rRNA + S-adenosyl-L-homocysteine + H(+). Specifically methylates the pseudouridine at position 1915 (m3Psi1915) in 23S rRNA. In Francisella philomiragia subsp. philomiragia (strain ATCC 25017 / CCUG 19701 / FSC 153 / O#319-036), this protein is Ribosomal RNA large subunit methyltransferase H.